The following is a 1048-amino-acid chain: Nonsense-mediated mRNA decay protein 5 (1048 aa).

The 81-residue stretch at 24-104 (AETHLKNASK…KDMLIKTMVS (81 aa)) folds into the Importin N-terminal domain. S977 bears the Phosphoserine mark.

As to quaternary structure, GTP-bound Ran dissociates the isolated NMD5/TFIIS complex.

It is found in the nucleus. The protein localises to the cytoplasm. Active in protein import into the nucleus. Its major import substrate is transcription elongation factor TFIIS. The polypeptide is Nonsense-mediated mRNA decay protein 5 (NMD5) (Saccharomyces cerevisiae (strain ATCC 204508 / S288c) (Baker's yeast)).